A 394-amino-acid chain; its full sequence is 1-deoxy-D-xylulose 5-phosphate reductoisomerase (394 aa).

The NADPH site is built by T14, G15, S16, I17, G40, and N128. K129 provides a ligand contact to 1-deoxy-D-xylulose 5-phosphate. Residue E130 participates in NADPH binding. D154 lines the Mn(2+) pocket. Residues S155, E156, S180, and H203 each coordinate 1-deoxy-D-xylulose 5-phosphate. Position 156 (E156) interacts with Mn(2+). NADPH is bound at residue G209. 1-deoxy-D-xylulose 5-phosphate-binding residues include S216, N221, K222, and E225. E225 contacts Mn(2+).

It belongs to the DXR family. Mg(2+) serves as cofactor. It depends on Mn(2+) as a cofactor.

The enzyme catalyses 2-C-methyl-D-erythritol 4-phosphate + NADP(+) = 1-deoxy-D-xylulose 5-phosphate + NADPH + H(+). The protein operates within isoprenoid biosynthesis; isopentenyl diphosphate biosynthesis via DXP pathway; isopentenyl diphosphate from 1-deoxy-D-xylulose 5-phosphate: step 1/6. In terms of biological role, catalyzes the NADPH-dependent rearrangement and reduction of 1-deoxy-D-xylulose-5-phosphate (DXP) to 2-C-methyl-D-erythritol 4-phosphate (MEP). This chain is 1-deoxy-D-xylulose 5-phosphate reductoisomerase, found in Xylella fastidiosa (strain M12).